The following is a 307-amino-acid chain: Transcription initiation factor IIF subunit beta (307 aa).

The segment covering 1–12 has biased composition (basic and acidic residues); the sequence is MSEEKPTVRTEE. Disordered stretches follow at residues 1 to 22 and 261 to 307; these read MSEE…DAGD and VELR…IDVV. Residues 13-22 show a composition bias toward acidic residues; sequence DDRYEDDAGD. The segment covering 263 to 290 has biased composition (polar residues); that stretch reads LRNQQASQSESSSIDHTGKNTSPDNPGT. Residues 292 to 307 show a composition bias toward acidic residues; the sequence is AEEDEDDDGVEMIDVV.

It belongs to the TFIIF beta subunit family. As to quaternary structure, component of the fcp1/TFIIF/polII complex via interaction of tfg3 with both tfg1/TFIIF-alpha and tfg2/TFIIF-beta subunits.

The protein localises to the nucleus. Functionally, TFIIF is a general transcription initiation factor that binds to RNA polymerase II and helps to recruit it to the initiation complex in collaboration with TFIIB. It promotes transcription elongation. The protein is Transcription initiation factor IIF subunit beta (tfg2) of Schizosaccharomyces pombe (strain 972 / ATCC 24843) (Fission yeast).